We begin with the raw amino-acid sequence, 179 residues long: Large ribosomal subunit protein uL5 (179 aa).

The protein belongs to the universal ribosomal protein uL5 family. As to quaternary structure, part of the 50S ribosomal subunit; part of the 5S rRNA/L5/L18/L25 subcomplex. Contacts the 5S rRNA and the P site tRNA. Forms a bridge to the 30S subunit in the 70S ribosome.

In terms of biological role, this is one of the proteins that bind and probably mediate the attachment of the 5S RNA into the large ribosomal subunit, where it forms part of the central protuberance. In the 70S ribosome it contacts protein S13 of the 30S subunit (bridge B1b), connecting the 2 subunits; this bridge is implicated in subunit movement. Contacts the P site tRNA; the 5S rRNA and some of its associated proteins might help stabilize positioning of ribosome-bound tRNAs. In Nitratidesulfovibrio vulgaris (strain ATCC 29579 / DSM 644 / CCUG 34227 / NCIMB 8303 / VKM B-1760 / Hildenborough) (Desulfovibrio vulgaris), this protein is Large ribosomal subunit protein uL5.